We begin with the raw amino-acid sequence, 156 residues long: Endoribonuclease YbeY (156 aa).

The Zn(2+) site is built by His-122, His-126, and His-132.

It belongs to the endoribonuclease YbeY family. Zn(2+) is required as a cofactor.

The protein resides in the cytoplasm. In terms of biological role, single strand-specific metallo-endoribonuclease involved in late-stage 70S ribosome quality control and in maturation of the 3' terminus of the 16S rRNA. The polypeptide is Endoribonuclease YbeY (Bacillus cereus (strain ZK / E33L)).